The sequence spans 275 residues: MAASFSSTAPTTPVLRFRANYSKPLLSLPDSCLRIISSAISPSTRLIACSFKTDKLPLGAGVNLSGGPVVKRSLQKRLVIRSATIEEIEAEKSAIETDVKSKMEKTIETLRTSFNSIRTGRSNAAMLDKIEVEYYGSPVSLKSIAQISTPDGSSLLLQPYDKSSLKAIEKAIVNSDLGVTPNNDGDVIRLSLPPLTSDRRKELSKVVAKQSEEGKVALRNIRRDALKSYDKLEKEKKLSEDNVKDLSSDLQKLIDVYMKKIEELYKQKEKELMKV.

The N-terminal 82 residues, 1 to 82, are a transit peptide targeting the chloroplast; it reads MAASFSSTAP…SLQKRLVIRS (82 aa). A coiled-coil region spans residues 215–271; that stretch reads KVALRNIRRDALKSYDKLEKEKKLSEDNVKDLSSDLQKLIDVYMKKIEELYKQKEKE.

The protein belongs to the RRF family.

The protein localises to the plastid. It localises to the chloroplast. Functionally, responsible for the release of ribosomes from messenger RNA at the termination of chloroplastic protein biosynthesis. The chain is Ribosome-recycling factor, chloroplastic (RRF) from Arabidopsis thaliana (Mouse-ear cress).